The primary structure comprises 302 residues: tRNA-cytidine(32) 2-sulfurtransferase (302 aa).

The short motif at 44–49 (SGGKDS) is the PP-loop motif element. [4Fe-4S] cluster is bound by residues Cys-119, Cys-122, and Cys-210.

This sequence belongs to the TtcA family. As to quaternary structure, homodimer. It depends on Mg(2+) as a cofactor. Requires [4Fe-4S] cluster as cofactor.

It is found in the cytoplasm. It catalyses the reaction cytidine(32) in tRNA + S-sulfanyl-L-cysteinyl-[cysteine desulfurase] + AH2 + ATP = 2-thiocytidine(32) in tRNA + L-cysteinyl-[cysteine desulfurase] + A + AMP + diphosphate + H(+). It functions in the pathway tRNA modification. Catalyzes the ATP-dependent 2-thiolation of cytidine in position 32 of tRNA, to form 2-thiocytidine (s(2)C32). The sulfur atoms are provided by the cysteine/cysteine desulfurase (IscS) system. The chain is tRNA-cytidine(32) 2-sulfurtransferase from Teredinibacter turnerae (strain ATCC 39867 / T7901).